The following is a 322-amino-acid chain: Ras association domain-containing protein 4 (322 aa).

The segment at 96-161 (EASPQDSKVP…SKSRAPSEAQ (66 aa)) is disordered. Residue S142 is modified to Phosphoserine. Residues 175-264 (YNHKTSVFTP…KIFLMEADLS (90 aa)) form the Ras-associating domain. The SARAH domain occupies 271–318 (VAQYIKFEMPVLDSFVEKLKEEEEREIIKLTMKFQALRLTMLQRLEQL).

As to quaternary structure, interacts directly with activated KRAS in a GTP-dependent manner.

Functionally, potential tumor suppressor. May act as a KRAS effector protein. May promote apoptosis and cell cycle arrest. This Mus musculus (Mouse) protein is Ras association domain-containing protein 4 (Rassf4).